The sequence spans 126 residues: SOSS complex subunit C homolog (126 aa).

Positions 106–126 (LEPLPSPATTPTAPPSHSISK) are disordered. Positions 107 to 119 (EPLPSPATTPTAP) are enriched in pro residues.

The protein belongs to the SOSS-C family.

The polypeptide is SOSS complex subunit C homolog (Drosophila sechellia (Fruit fly)).